A 409-amino-acid polypeptide reads, in one-letter code: Elongation factor Tu, chloroplastic (409 aa).

One can recognise a tr-type G domain in the interval 10–214; it reads KPHINIGTIG…AVDAYIPTPE (205 aa). Residues 19 to 26 form a G1 region; it reads GHVDHGKT. Residue 19 to 26 coordinates GTP; that stretch reads GHVDHGKT. Threonine 26 lines the Mg(2+) pocket. The G2 stretch occupies residues 60 to 64; that stretch reads GITIN. Residues 81-84 are G3; the sequence is DCPG. GTP contacts are provided by residues 81 to 85 and 136 to 139; these read DCPGH and NKQD. The interval 136–139 is G4; it reads NKQD. Positions 174–176 are G5; sequence SRL.

It belongs to the TRAFAC class translation factor GTPase superfamily. Classic translation factor GTPase family. EF-Tu/EF-1A subfamily.

It localises to the plastid. The protein resides in the chloroplast. It catalyses the reaction GTP + H2O = GDP + phosphate + H(+). GTP hydrolase that promotes the GTP-dependent binding of aminoacyl-tRNA to the A-site of ribosomes during protein biosynthesis. The chain is Elongation factor Tu, chloroplastic (tufA) from Stephanocyclus meneghinianus (Diatom).